The following is a 260-amino-acid chain: Emerin (260 aa).

An N-acetylmethionine modification is found at Met1. Positions 1 to 45 (MDDYAVLSDTELAAVLRQYNIPHGPILGSTRKLYEKKIFEYETQR) constitute an LEM domain. Residues Ser8 and Ser29 each carry the phosphoserine modification. Residues 46–224 (RRLSPPSSSS…PTAALGQDRQ (179 aa)) form an interaction with F-actin region. Ser49 carries the post-translational modification Phosphoserine; by PKA. Phosphoserine occurs at positions 54, 69, 72, 88, 99, 142, 143, and 144. Position 162 is a phosphotyrosine (Tyr162). An interaction with CTNNB1 region spans residues 169–188 (RPISNVSRSSLGLSYYPRSS). 3 positions are modified to phosphoserine: Ser172, Ser175, and Ser177. The interval 184 to 206 (YPRSSTSSVSSSSSSPSSWLTRR) is disordered. The span at 187–201 (SSTSSVSSSSSSPSS) shows a compositional bias: low complexity. Residues 225-245 (VPLWGQLLLFLAFATFLLFVY) form a helical membrane-spanning segment.

In terms of assembly, interacts with lamins A and C, BANF1, GMCL, BCLAF1 and YTHDC1/YT521. Interacts with TMEM43; the interaction retains emerin in the inner nuclear membrane. Interacts with ACTB, SPTAN1, F-actin, CTNNB1 and beta-tubulin. Interacts with SUN1 and SUN2. Interacts with TMEM201. Interacts with NEMP1.

It is found in the nucleus inner membrane. The protein resides in the nucleus outer membrane. In terms of biological role, stabilizes and promotes the formation of a nuclear actin cortical network. Stimulates actin polymerization in vitro by binding and stabilizing the pointed end of growing filaments. Inhibits beta-catenin activity by preventing its accumulation in the nucleus. Acts by influencing the nuclear accumulation of beta-catenin through a CRM1-dependent export pathway. Links centrosomes to the nuclear envelope via a microtubule association. Required for proper localization of non-farnesylated prelamin-A/C. Together with NEMP1, contributes to nuclear envelope stiffness in germ cells. The polypeptide is Emerin (Emd) (Rattus norvegicus (Rat)).